A 298-amino-acid chain; its full sequence is GTP cyclohydrolase FolE2 (298 aa).

Belongs to the GTP cyclohydrolase IV family.

It carries out the reaction GTP + H2O = 7,8-dihydroneopterin 3'-triphosphate + formate + H(+). It participates in cofactor biosynthesis; 7,8-dihydroneopterin triphosphate biosynthesis; 7,8-dihydroneopterin triphosphate from GTP: step 1/1. Its function is as follows. Converts GTP to 7,8-dihydroneopterin triphosphate. The polypeptide is GTP cyclohydrolase FolE2 (Neisseria meningitidis serogroup B (strain ATCC BAA-335 / MC58)).